We begin with the raw amino-acid sequence, 723 residues long: MVRYMVTSALPYANGPIHAGHLAGAYLPADIFVRYLRLKGEDVVFICGTDEHGTPISFRALKEGRSPREIVDEFHEHIKITFQRAKISFDFFGRTELPIHYKLSQQFFLKAYENGHLVKKVTKQAYCEHDKMFLPDRFVIGTCPFCGAENQRGDQCEVCGRPLTPEILINPRCALCGRPISFRESAHYYIKMQDFAEKLKRWIENQPWKPNVKNMVLKWIEEGLEERAITRDLNWGIPVPLDEEDMKNKVLYVWFEAPIGYISITMEYFKRLGKPNEWKKYWLNIDSETRVIHFIGKDNIPFHAIFWPAFLMAYGKYKDEEVEAEWNLPYDIPANEYLTLEGKKFSTSRNWAIWVHEFLDVFPADYLRYYLTTIMPETRDSDFSFAEFKTRINEELVNNLGNFVHRAMTFVNRYFDGIVPERGELDELDRQALEEIEKAFEEVGELIMNYRFKDALKRVMELASFGNKYFDHKQPWKTAKEDRARTGTTVNISLQIVKALGILLEPFLPDASEKIWHLLNLDEVKKWKFKELPAGHRVRKAEILFKKVTDEQIIYFILNYMGRNNPEGAKMLLEKYYKREDVIKVAKEKFGEESKIILKRIYKDIKLEEGKEEKEMEYVKFEDFAKLDLRVGKIIEVKDHPNADKLYIVKVDLGKEVRTLVAGLKKYYKPEELLNKYVIIVANLEPKKLRGVESQGMLLAADDGENVALLMPDKEVKLGAKVR.

Positions 11-21 match the 'HIGH' region motif; it reads PYANGPIHAGH. Positions 143, 146, 156, and 159 each coordinate Zn(2+). The short motif at 344 to 348 is the 'KMSKS' region element; sequence KFSTS. Thr347 is an ATP binding site. Residues 623–723 form the tRNA-binding domain; the sequence is DFAKLDLRVG…KEVKLGAKVR (101 aa).

Belongs to the class-I aminoacyl-tRNA synthetase family. MetG type 1 subfamily. As to quaternary structure, homodimer. Requires Zn(2+) as cofactor.

The protein localises to the cytoplasm. It catalyses the reaction tRNA(Met) + L-methionine + ATP = L-methionyl-tRNA(Met) + AMP + diphosphate. Is required not only for elongation of protein synthesis but also for the initiation of all mRNA translation through initiator tRNA(fMet) aminoacylation. The chain is Methionine--tRNA ligase from Pyrococcus horikoshii (strain ATCC 700860 / DSM 12428 / JCM 9974 / NBRC 100139 / OT-3).